We begin with the raw amino-acid sequence, 169 residues long: uncharacterized protein (169 aa).

In terms of domain architecture, Nudix hydrolase spans 32-162; sequence CNFRVVNSFV…EPAKSDLIKL (131 aa). Residues 69–91 carry the Nudix box motif; the sequence is GGHVESGETYEDALQRELEEELN. Positions 85 and 89 each coordinate Mg(2+).

This sequence belongs to the Nudix hydrolase family. Requires Mg(2+) as cofactor.

This is an uncharacterized protein from Nostoc sp. (strain PCC 7120 / SAG 25.82 / UTEX 2576).